We begin with the raw amino-acid sequence, 470 residues long: Protein ASPARTIC PROTEASE IN GUARD CELL 2 (470 aa).

Positions 1-19 (MLLPLFFFFLHLHLHLSSS) are cleaved as a signal peptide. Residues 131-466 (YFVRIGVGSP…DGANGFVGFG (336 aa)) form the Peptidase A1 domain. The active site involves Asp149. 6 disulfides stabilise this stretch: Cys159–Cys162, Cys165–Cys239, Cys186–Cys204, Cys191–Cys199, Cys278–Cys470, and Cys389–Cys431. Residue Asp350 is part of the active site.

This sequence belongs to the peptidase A1 family.

Its function is as follows. Aspartic protease that may be involved in drought avoidance through abscisic acid signaling. The polypeptide is Protein ASPARTIC PROTEASE IN GUARD CELL 2 (ASPG2) (Arabidopsis thaliana (Mouse-ear cress)).